We begin with the raw amino-acid sequence, 228 residues long: Chaperone protein FanE (228 aa).

Positions 1-19 are cleaved as a signal peptide; that stretch reads MNKFISIIALCVFSSYANA. C157 and C198 are disulfide-bonded.

Belongs to the periplasmic pilus chaperone family.

The protein localises to the periplasm. Functionally, mediates assembly of pili by forming soluble multimeric complexes with pili subunits as an intermediate step in the assembly process. This protein is involved in K99 pili assembly. This is Chaperone protein FanE (fanE) from Escherichia coli.